The chain runs to 95 residues: MNIRPLQDRVLVRRAEEEKKSAGGIILTGNAQEKPSQGEVVAVGNGKKLDNGTTLPMDVKVGDKVLFGKYSGSEVKVGDETLLMMREEDIMGIIA.

This sequence belongs to the GroES chaperonin family. In terms of assembly, heptamer of 7 subunits arranged in a ring. Interacts with the chaperonin GroEL.

The protein resides in the cytoplasm. Together with the chaperonin GroEL, plays an essential role in assisting protein folding. The GroEL-GroES system forms a nano-cage that allows encapsulation of the non-native substrate proteins and provides a physical environment optimized to promote and accelerate protein folding. GroES binds to the apical surface of the GroEL ring, thereby capping the opening of the GroEL channel. This chain is Co-chaperonin GroES, found in Francisella tularensis subsp. holarctica (strain FTNF002-00 / FTA).